A 524-amino-acid polypeptide reads, in one-letter code: GMP synthase [glutamine-hydrolyzing] (524 aa).

The Glutamine amidotransferase type-1 domain occupies 9–207 (RILILDFGSQ…VIHICQCIPN (199 aa)). C86 serves as the catalytic Nucleophile. Catalysis depends on residues H181 and E183. The GMPS ATP-PPase domain maps to 208-399 (WTTKHIIEDS…LGLPADLIYR (192 aa)). Residue 235-241 (SGGVDSA) coordinates ATP.

In terms of assembly, homodimer.

The enzyme catalyses XMP + L-glutamine + ATP + H2O = GMP + L-glutamate + AMP + diphosphate + 2 H(+). It participates in purine metabolism; GMP biosynthesis; GMP from XMP (L-Gln route): step 1/1. Its function is as follows. Catalyzes the synthesis of GMP from XMP. The polypeptide is GMP synthase [glutamine-hydrolyzing] (Coxiella burnetii (strain CbuK_Q154) (Coxiella burnetii (strain Q154))).